A 267-amino-acid chain; its full sequence is Diphthine--ammonia ligase (267 aa).

The residue at position 97 (tyrosine 97) is a Phosphotyrosine.

It belongs to the Diphthine--ammonia ligase family.

The enzyme catalyses diphthine-[translation elongation factor 2] + NH4(+) + ATP = diphthamide-[translation elongation factor 2] + AMP + diphosphate + H(+). It participates in protein modification; peptidyl-diphthamide biosynthesis. Amidase that catalyzes the last step of diphthamide biosynthesis using ammonium and ATP. Diphthamide biosynthesis consists in the conversion of an L-histidine residue in the translation elongation factor 2 (EEF2) to diphthamide. This Mus musculus (Mouse) protein is Diphthine--ammonia ligase (Dph6).